The following is a 166-amino-acid chain: Interferon gamma (166 aa).

The first 23 residues, 1 to 23, serve as a signal peptide directing secretion; sequence MKYTSYFLALLLCVLLGFSGSYG. Gln-24 carries the post-translational modification Pyrrolidone carboxylic acid. N-linked (GlcNAc...) asparagine glycans are attached at residues Asn-39 and Asn-106.

Belongs to the type II (or gamma) interferon family. As to quaternary structure, homodimer. Interacts with IFNGR1 (via extracellular domain); this interaction promotes IFNGR1 dimerization. As to expression, released primarily from activated T lymphocytes.

It localises to the secreted. Its function is as follows. Type II interferon produced by immune cells such as T-cells and NK cells that plays crucial roles in antimicrobial, antiviral, and antitumor responses by activating effector immune cells and enhancing antigen presentation. Primarily signals through the JAK-STAT pathway after interaction with its receptor IFNGR1 to affect gene regulation. Upon IFNG binding, IFNGR1 intracellular domain opens out to allow association of downstream signaling components JAK2, JAK1 and STAT1, leading to STAT1 activation, nuclear translocation and transcription of IFNG-regulated genes. Many of the induced genes are transcription factors such as IRF1 that are able to further drive regulation of a next wave of transcription. Plays a role in class I antigen presentation pathway by inducing a replacement of catalytic proteasome subunits with immunoproteasome subunits. In turn, increases the quantity, quality, and repertoire of peptides for class I MHC loading. Increases the efficiency of peptide generation also by inducing the expression of activator PA28 that associates with the proteasome and alters its proteolytic cleavage preference. Up-regulates as well MHC II complexes on the cell surface by promoting expression of several key molecules such as cathepsins B/CTSB, H/CTSH, and L/CTSL. Participates in the regulation of hematopoietic stem cells during development and under homeostatic conditions by affecting their development, quiescence, and differentiation. This Bubalus bubalis (Domestic water buffalo) protein is Interferon gamma (IFNG).